Consider the following 168-residue polypeptide: 2-C-methyl-D-erythritol 2,4-cyclodiphosphate synthase (168 aa).

A divalent metal cation-binding residues include aspartate 13 and histidine 15. 4-CDP-2-C-methyl-D-erythritol 2-phosphate contacts are provided by residues 13–15 (DVH) and 39–40 (HS). Histidine 47 serves as a coordination point for a divalent metal cation. Residues 61–63 (DIG), 66–70 (FPDTD), phenylalanine 144, and lysine 147 each bind 4-CDP-2-C-methyl-D-erythritol 2-phosphate.

Belongs to the IspF family. As to quaternary structure, homotrimer. It depends on a divalent metal cation as a cofactor.

The catalysed reaction is 4-CDP-2-C-methyl-D-erythritol 2-phosphate = 2-C-methyl-D-erythritol 2,4-cyclic diphosphate + CMP. Its pathway is isoprenoid biosynthesis; isopentenyl diphosphate biosynthesis via DXP pathway; isopentenyl diphosphate from 1-deoxy-D-xylulose 5-phosphate: step 4/6. In terms of biological role, involved in the biosynthesis of isopentenyl diphosphate (IPP) and dimethylallyl diphosphate (DMAPP), two major building blocks of isoprenoid compounds. Catalyzes the conversion of 4-diphosphocytidyl-2-C-methyl-D-erythritol 2-phosphate (CDP-ME2P) to 2-C-methyl-D-erythritol 2,4-cyclodiphosphate (ME-CPP) with a corresponding release of cytidine 5-monophosphate (CMP). In Cupriavidus metallidurans (strain ATCC 43123 / DSM 2839 / NBRC 102507 / CH34) (Ralstonia metallidurans), this protein is 2-C-methyl-D-erythritol 2,4-cyclodiphosphate synthase.